Here is a 266-residue protein sequence, read N- to C-terminus: Phosphatidylglycerol--prolipoprotein diacylglyceryl transferase (266 aa).

4 consecutive transmembrane segments (helical) span residues 14–34 (FGPL…AFFW), 55–75 (FLFY…ILFY), 91–111 (WKGG…MWLF), and 117–137 (VSMF…LFFG). Arg138 is an a 1,2-diacyl-sn-glycero-3-phospho-(1'-sn-glycerol) binding site. The next 3 membrane-spanning stretches (helical) occupy residues 172–192 (YPTQ…ILMF), 201–221 (GAAS…VEFF), and 235–255 (WVTM…ALVV).

It belongs to the Lgt family.

It is found in the cell inner membrane. It catalyses the reaction L-cysteinyl-[prolipoprotein] + a 1,2-diacyl-sn-glycero-3-phospho-(1'-sn-glycerol) = an S-1,2-diacyl-sn-glyceryl-L-cysteinyl-[prolipoprotein] + sn-glycerol 1-phosphate + H(+). It participates in protein modification; lipoprotein biosynthesis (diacylglyceryl transfer). Functionally, catalyzes the transfer of the diacylglyceryl group from phosphatidylglycerol to the sulfhydryl group of the N-terminal cysteine of a prolipoprotein, the first step in the formation of mature lipoproteins. This Hydrogenovibrio crunogenus (strain DSM 25203 / XCL-2) (Thiomicrospira crunogena) protein is Phosphatidylglycerol--prolipoprotein diacylglyceryl transferase.